A 231-amino-acid chain; its full sequence is Lipid A acyltransferase PagP (231 aa).

Residues 1 to 23 (MNKLTVRNFIVGLLIVFSLNSFS) form the signal peptide. Positions 24 to 43 (SPPSISNSSSNSIDENSPIN) are enriched in low complexity. The segment at 24–59 (SPPSISNSSSNSIDENSPINTFKISPDNQTSKKSDL) is disordered. Residues histidine 100, aspartate 145, and serine 146 contribute to the active site.

It belongs to the lipid A palmitoyltransferase family. Homodimer.

The protein resides in the cell outer membrane. The catalysed reaction is a lipid A + a 1,2-diacyl-sn-glycero-3-phosphocholine = a hepta-acyl lipid A + a 2-acyl-sn-glycero-3-phosphocholine. The enzyme catalyses a lipid IVA + a 1,2-diacyl-sn-glycero-3-phosphocholine = a lipid IVB + a 2-acyl-sn-glycero-3-phosphocholine. It carries out the reaction a lipid IIA + a 1,2-diacyl-sn-glycero-3-phosphocholine = a lipid IIB + a 2-acyl-sn-glycero-3-phosphocholine. In terms of biological role, transfers a fatty acid residue from the sn-1 position of a phospholipid to the N-linked hydroxyfatty acid chain on the proximal unit of lipid A or its precursors. The polypeptide is Lipid A acyltransferase PagP (Legionella longbeachae serogroup 1 (strain NSW150)).